The sequence spans 392 residues: Alanine racemase 2 (392 aa).

The active-site Proton acceptor; specific for D-alanine is Lys40. Position 40 is an N6-(pyridoxal phosphate)lysine (Lys40). Residue Arg138 coordinates substrate. The Proton acceptor; specific for L-alanine role is filled by Tyr266. Residue Met314 coordinates substrate.

Belongs to the alanine racemase family. Pyridoxal 5'-phosphate serves as cofactor.

It catalyses the reaction L-alanine = D-alanine. It participates in amino-acid biosynthesis; D-alanine biosynthesis; D-alanine from L-alanine: step 1/1. Its function is as follows. Catalyzes the interconversion of L-alanine and D-alanine. May also act on other amino acids. This is Alanine racemase 2 (alr2) from Oceanobacillus iheyensis (strain DSM 14371 / CIP 107618 / JCM 11309 / KCTC 3954 / HTE831).